A 200-amino-acid chain; its full sequence is Oligoribonuclease (200 aa).

An Exonuclease domain is found at 5–169 (MVWIDCEMTG…ADIRESIAEL (165 aa)). The active site involves Tyr126.

Belongs to the oligoribonuclease family.

Its subcellular location is the cytoplasm. Its function is as follows. 3'-to-5' exoribonuclease specific for small oligoribonucleotides. In Streptomyces avermitilis (strain ATCC 31267 / DSM 46492 / JCM 5070 / NBRC 14893 / NCIMB 12804 / NRRL 8165 / MA-4680), this protein is Oligoribonuclease.